A 1762-amino-acid polypeptide reads, in one-letter code: ADAMTS-like protein 1 (1762 aa).

A signal peptide spans 1–28; the sequence is MECCRRATPGTLLLFLAFLLLSSRTARS. Positions 33 to 82 constitute a TSP type-1 1 domain; it reads DGLWDAWGPWSECSRTCGGGASYSLRRCLSSKSCEGRNIRYRTCSNVDCP. C-linked (Man) tryptophan glycans are attached at residues W39 and W42. Disulfide bonds link C45-C76, C49-C81, and C60-C66. O-linked (Fuc...) threonine glycosylation occurs at T48. Residue N251 is glycosylated (N-linked (GlcNAc...) asparagine). An O-linked (Fuc...) threonine glycan is attached at T312. TSP type-1 domains are found at residues 376 to 424, 436 to 493, 522 to 584, 607 to 665, 666 to 729, and 788 to 850; these read PLPR…MYTP, DCPK…TPCY, EEPS…GPCS, ELYD…NLDP, CPAR…FNCP, and CPSE…ATCA. O-linked (Fuc...) serine glycosylation occurs at S391. T451 carries an O-linked (Fuc...) threonine glycan. 3 cysteine pairs are disulfide-bonded: C534/C578, C538/C583, and C549/C567. 7 disulfide bridges follow: C678–C723, C682–C728, C693–C712, C800–C844, C804–C849, C815–C832, and C899–C947. Residues 861 to 963 enclose the Ig-like C2-type 1 domain; sequence PHIAAARKVY…EHFVIKLIGG (103 aa). A disordered region spans residues 1120–1164; it reads LKPSERRTSPVTLSPHKHVSGFSSSLRTSSTGDAGGGSRRPHRKP. Low complexity predominate over residues 1139 to 1151; sequence SGFSSSLRTSSTG. Ig-like C2-type domains are found at residues 1164–1266, 1286–1369, and 1395–1485; these read PTIL…IAVT, PAVT…TQLL, and PSVL…ASLV. 3 disulfide bridges follow: C1202–C1250, C1308–C1353, and C1418–C1469. TSP type-1 domains are found at residues 1545 to 1608 and 1666 to 1726; these read CPSR…QLCV and CSVH…TPCE. The PLAC domain maps to 1726–1762; it reads ENMECRDTTRYCEKVKQLKLCQLSQFKSRCCGTCGKA.

Monomer. C-, N- and O-glycosylated. O-fucosylated by POFUT2 on a serine or a threonine residue found within the consensus sequence C1-X(2)-(S/T)-C2-G of the TSP type-1 repeat domains where C1 and C2 are the first and second cysteine residue of the repeat, respectively. Fucosylated repeats can then be further glycosylated by the addition of a beta-1,3-glucose residue by the glucosyltransferase, B3GALTL. Fucosylation mediates the efficient secretion of ADAMTSL1. Can also be C-glycosylated with one or two mannose molecules on tryptophan residues within the consensus sequence W-X-X-W of the TPRs, and N-glycosylated. These other glycosylations can also facilitate secretion. Post-translationally, disulfide bonds are present. In terms of tissue distribution, expressed primarily in adult skeletal muscle.

It is found in the secreted. The protein localises to the extracellular space. Its subcellular location is the extracellular matrix. This Homo sapiens (Human) protein is ADAMTS-like protein 1 (ADAMTSL1).